The sequence spans 340 residues: ATP-dependent 6-phosphofructokinase (340 aa).

Gly-11 serves as a coordination point for ATP. 21–25 (RAVVR) provides a ligand contact to ADP. ATP-binding positions include 72–73 (RY) and 102–105 (GDGS). Position 103 (Asp-103) interacts with Mg(2+). A substrate-binding site is contributed by 125 to 127 (TID). The active-site Proton acceptor is the Asp-127. An ADP-binding site is contributed by Arg-154. Substrate is bound by residues Arg-162 and 169–171 (MGR). ADP contacts are provided by residues 185–187 (GAD) and 213–215 (KHH). Substrate contacts are provided by residues Glu-222, Arg-244, and 250-253 (HLLR).

This sequence belongs to the phosphofructokinase type A (PFKA) family. ATP-dependent PFK group I subfamily. Prokaryotic clade 'B1' sub-subfamily. Homotetramer. It depends on Mg(2+) as a cofactor.

Its subcellular location is the cytoplasm. The catalysed reaction is beta-D-fructose 6-phosphate + ATP = beta-D-fructose 1,6-bisphosphate + ADP + H(+). The protein operates within carbohydrate degradation; glycolysis; D-glyceraldehyde 3-phosphate and glycerone phosphate from D-glucose: step 3/4. With respect to regulation, allosterically activated by ADP and other diphosphonucleosides, and allosterically inhibited by phosphoenolpyruvate. In terms of biological role, catalyzes the phosphorylation of D-fructose 6-phosphate to fructose 1,6-bisphosphate by ATP, the first committing step of glycolysis. This Streptococcus agalactiae serotype Ia (strain ATCC 27591 / A909 / CDC SS700) protein is ATP-dependent 6-phosphofructokinase.